The sequence spans 320 residues: Acetyl-coenzyme A carboxylase carboxyl transferase subunit alpha (320 aa).

Residues 41 to 295 enclose the CoA carboxyltransferase C-terminal domain; it reads RIEEKAGQAL…GDAIAQAFDE (255 aa).

It belongs to the AccA family. Acetyl-CoA carboxylase is a heterohexamer composed of biotin carboxyl carrier protein (AccB), biotin carboxylase (AccC) and two subunits each of ACCase subunit alpha (AccA) and ACCase subunit beta (AccD).

The protein resides in the cytoplasm. It catalyses the reaction N(6)-carboxybiotinyl-L-lysyl-[protein] + acetyl-CoA = N(6)-biotinyl-L-lysyl-[protein] + malonyl-CoA. The protein operates within lipid metabolism; malonyl-CoA biosynthesis; malonyl-CoA from acetyl-CoA: step 1/1. Its function is as follows. Component of the acetyl coenzyme A carboxylase (ACC) complex. First, biotin carboxylase catalyzes the carboxylation of biotin on its carrier protein (BCCP) and then the CO(2) group is transferred by the carboxyltransferase to acetyl-CoA to form malonyl-CoA. The chain is Acetyl-coenzyme A carboxylase carboxyl transferase subunit alpha from Bradyrhizobium sp. (strain ORS 278).